The following is an 81-amino-acid chain: ATP synthase subunit c, chloroplastic (81 aa).

A run of 2 helical transmembrane segments spans residues 3-23 (PIIS…ASIG) and 57-77 (LAFM…LLFA).

The protein belongs to the ATPase C chain family. In terms of assembly, F-type ATPases have 2 components, F(1) - the catalytic core - and F(0) - the membrane proton channel. F(1) has five subunits: alpha(3), beta(3), gamma(1), delta(1), epsilon(1). F(0) has four main subunits: a(1), b(1), b'(1) and c(10-14). The alpha and beta chains form an alternating ring which encloses part of the gamma chain. F(1) is attached to F(0) by a central stalk formed by the gamma and epsilon chains, while a peripheral stalk is formed by the delta, b and b' chains.

The protein localises to the plastid. The protein resides in the chloroplast thylakoid membrane. F(1)F(0) ATP synthase produces ATP from ADP in the presence of a proton or sodium gradient. F-type ATPases consist of two structural domains, F(1) containing the extramembraneous catalytic core and F(0) containing the membrane proton channel, linked together by a central stalk and a peripheral stalk. During catalysis, ATP synthesis in the catalytic domain of F(1) is coupled via a rotary mechanism of the central stalk subunits to proton translocation. Functionally, key component of the F(0) channel; it plays a direct role in translocation across the membrane. A homomeric c-ring of between 10-14 subunits forms the central stalk rotor element with the F(1) delta and epsilon subunits. The polypeptide is ATP synthase subunit c, chloroplastic (Cicer arietinum (Chickpea)).